Here is a 294-residue protein sequence, read N- to C-terminus: UPF0761 membrane protein YPK_4186 (294 aa).

7 helical membrane-spanning segments follow: residues 44-64, 67-87, 108-128, 136-156, 185-205, 212-232, and 246-266; these read LLSL…FPMF, ISIK…GDII, GLIV…NIIW, LVFS…LVGA, VFPL…VPTV, ALIG…GFAM, and VLAV…IVLL.

The protein belongs to the UPF0761 family.

The protein resides in the cell inner membrane. The polypeptide is UPF0761 membrane protein YPK_4186 (Yersinia pseudotuberculosis serotype O:3 (strain YPIII)).